We begin with the raw amino-acid sequence, 189 residues long: Transcription factor FapR (189 aa).

This sequence belongs to the FapR family.

Its function is as follows. Transcriptional factor involved in regulation of membrane lipid biosynthesis by repressing genes involved in fatty acid and phospholipid metabolism. The sequence is that of Transcription factor FapR from Exiguobacterium sibiricum (strain DSM 17290 / CCUG 55495 / CIP 109462 / JCM 13490 / 255-15).